The chain runs to 221 residues: Ribosomal RNA small subunit methyltransferase G 3 (221 aa).

Residues Gly-85, Phe-90, 136–137 (IE), and Arg-150 each bind S-adenosyl-L-methionine.

The protein belongs to the methyltransferase superfamily. RNA methyltransferase RsmG family.

The protein resides in the cytoplasm. The enzyme catalyses guanosine(527) in 16S rRNA + S-adenosyl-L-methionine = N(7)-methylguanosine(527) in 16S rRNA + S-adenosyl-L-homocysteine. Its function is as follows. Specifically methylates the N7 position of guanine in position 527 of 16S rRNA. This is Ribosomal RNA small subunit methyltransferase G 3 from Bdellovibrio bacteriovorus (strain ATCC 15356 / DSM 50701 / NCIMB 9529 / HD100).